Here is a 275-residue protein sequence, read N- to C-terminus: Diaminopimelate epimerase (275 aa).

Substrate is bound by residues Asn-13, Gln-46, and Asn-66. Catalysis depends on Cys-75, which acts as the Proton donor. Residues 76-77, Asn-159, Asn-192, and 210-211 contribute to the substrate site; these read GN and ER. Cys-219 acts as the Proton acceptor in catalysis. 220-221 is a substrate binding site; sequence GT.

This sequence belongs to the diaminopimelate epimerase family. In terms of assembly, homodimer.

The protein resides in the cytoplasm. The enzyme catalyses (2S,6S)-2,6-diaminopimelate = meso-2,6-diaminopimelate. The protein operates within amino-acid biosynthesis; L-lysine biosynthesis via DAP pathway; DL-2,6-diaminopimelate from LL-2,6-diaminopimelate: step 1/1. Its function is as follows. Catalyzes the stereoinversion of LL-2,6-diaminopimelate (L,L-DAP) to meso-diaminopimelate (meso-DAP), a precursor of L-lysine and an essential component of the bacterial peptidoglycan. This is Diaminopimelate epimerase from Psychromonas ingrahamii (strain DSM 17664 / CCUG 51855 / 37).